A 202-amino-acid chain; its full sequence is Glycerol-3-phosphate acyltransferase (202 aa).

The next 4 helical transmembrane spans lie at 11–31 (VLIA…GLIL), 87–107 (PALA…WLGF), 116–136 (FIGV…AIWL), and 158–178 (LILW…LAAL).

Belongs to the PlsY family. Probably interacts with PlsX.

The protein resides in the cell inner membrane. It catalyses the reaction an acyl phosphate + sn-glycerol 3-phosphate = a 1-acyl-sn-glycero-3-phosphate + phosphate. Its pathway is lipid metabolism; phospholipid metabolism. In terms of biological role, catalyzes the transfer of an acyl group from acyl-phosphate (acyl-PO(4)) to glycerol-3-phosphate (G3P) to form lysophosphatidic acid (LPA). This enzyme utilizes acyl-phosphate as fatty acyl donor, but not acyl-CoA or acyl-ACP. The polypeptide is Glycerol-3-phosphate acyltransferase (Methylorubrum extorquens (strain PA1) (Methylobacterium extorquens)).